A 204-amino-acid polypeptide reads, in one-letter code: Proteasome subunit beta type-3 (204 aa).

Belongs to the peptidase T1B family. In terms of assembly, the 26S proteasome consists of a 20S proteasome core and two 19S regulatory subunits. The 20S proteasome core is composed of 28 subunits that are arranged in four stacked rings, resulting in a barrel-shaped structure. The two end rings are each formed by seven alpha subunits, and the two central rings are each formed by seven beta subunits. The catalytic chamber with the active sites is on the inside of the barrel.

The protein resides in the cytoplasm. It localises to the nucleus. Its function is as follows. Non-catalytic component of the proteasome, a multicatalytic proteinase complex which is characterized by its ability to cleave peptides with Arg, Phe, Tyr, Leu, and Glu adjacent to the leaving group at neutral or slightly basic pH. The proteasome has an ATP-dependent proteolytic activity. The sequence is that of Proteasome subunit beta type-3 (PBC1) from Picea mariana (Black spruce).